Reading from the N-terminus, the 589-residue chain is Cyclohexane-1,2-dione hydrolase (589 aa).

Residue Glu-52 participates in thiamine diphosphate binding. Positions 400-480 are thiamine pyrophosphate binding; the sequence is NHTLPMFGGA…VITMVFTNES (81 aa). Asp-451 and Asn-478 together coordinate Mg(2+).

The protein belongs to the TPP enzyme family. In terms of assembly, homodimer. Mg(2+) serves as cofactor. Thiamine diphosphate is required as a cofactor. Requires FAD as cofactor.

It catalyses the reaction cyclohexan-1,2-dione + H2O = 6-oxohexanoate + H(+). Functionally, catalyzes the ring-opening cleavage of the alicyclic alcohol cyclohexane-1,2-dione. The chain is Cyclohexane-1,2-dione hydrolase from Azoarcus sp.